We begin with the raw amino-acid sequence, 3075 residues long: Probable polyketide synthase 30 (3075 aa).

The region spanning serine 26–glutamate 458 is the Ketosynthase family 3 (KS3) domain. Residues cysteine 198, histidine 337, and histidine 381 each act as for beta-ketoacyl synthase activity in the active site. An acyl/malonyl transferase region spans residues glycine 663 to tyrosine 696. Serine 673 functions as the For acyl/malonyl transferase activity in the catalytic mechanism. The N-terminal hotdog fold stretch occupies residues glycine 963 to serine 1085. One can recognise a PKS/mFAS DH domain in the interval glycine 963–proline 1269. Residue histidine 997 is the Proton acceptor; for dehydratase activity of the active site. The C-terminal hotdog fold stretch occupies residues asparagine 1102–proline 1269. Catalysis depends on aspartate 1174, which acts as the Proton donor; for dehydratase activity. Residues aspartate 2533–histidine 2610 form the Carrier domain. Serine 2570 is modified (O-(pantetheine 4'-phosphoryl)serine).

Requires pantetheine 4'-phosphate as cofactor.

Functionally, probable polyketide synthase. May be involved in the process of cell migration. The chain is Probable polyketide synthase 30 (pks30) from Dictyostelium discoideum (Social amoeba).